Consider the following 370-residue polypeptide: Cyclin-A3-4 (370 aa).

The protein belongs to the cyclin family. Cyclin AB subfamily. Interacts with FZR2/CCS52A1, FZR1/CCS52A2 and FZR3/CCS52B.

The chain is Cyclin-A3-4 (CYCA3-4) from Arabidopsis thaliana (Mouse-ear cress).